We begin with the raw amino-acid sequence, 84 residues long: Small ribosomal subunit protein bS18 (84 aa).

Belongs to the bacterial ribosomal protein bS18 family. In terms of assembly, part of the 30S ribosomal subunit. Forms a tight heterodimer with protein bS6.

Functionally, binds as a heterodimer with protein bS6 to the central domain of the 16S rRNA, where it helps stabilize the platform of the 30S subunit. This Mycobacterium leprae (strain Br4923) protein is Small ribosomal subunit protein bS18.